Here is a 125-residue protein sequence, read N- to C-terminus: MRHYEIVFMVHPDQSEQVPGMIERYTGSVKEAGGQVHRLEDWGRRQLAYPINKLHKAHYVLMNVEAPQEVIDELETTFRYNDAVLRNVIIRTKHAVTEASPMVKAKDDRKALAEVENNDFEDAEE.

The protein belongs to the bacterial ribosomal protein bS6 family.

Binds together with bS18 to 16S ribosomal RNA. This Pasteurella multocida (strain Pm70) protein is Small ribosomal subunit protein bS6 (rpsF).